A 381-amino-acid polypeptide reads, in one-letter code: Creatine kinase B-type (381 aa).

S4 carries the post-translational modification Phosphoserine. Residues 11 to 98 (KLRFPAEDEF…FDPIIEDRHG (88 aa)) enclose the Phosphagen kinase N-terminal domain. T35 bears the Phosphothreonine mark. K45 is covalently cross-linked (Glycyl lysine isopeptide (Lys-Gly) (interchain with G-Cter in ubiquitin)). V72 contacts creatine. Positions 96–110 (RHGGYKPSDEHKTDL) are enriched in basic and acidic residues. The segment at 96–123 (RHGGYKPSDEHKTDLNPDNLQGGDDLDP) is disordered. Residues K101 and K107 each participate in a glycyl lysine isopeptide (Lys-Gly) (interchain with G-Cter in ubiquitin) cross-link. Position 125 is a phosphotyrosine (Y125). The Phosphagen kinase C-terminal domain occupies 125–367 (YVLSSRVRTG…KLLIEMEQRL (243 aa)). ATP contacts are provided by residues 128-132 (SSRVR), R130, R132, and H191. Residues 130–138 (RVRTGRSIR) form an internal MTS-like signal region. S199 is subject to Phosphoserine. Position 232 (E232) interacts with creatine. Position 236 (R236) interacts with ATP. Y269 carries the post-translational modification 3'-nitrotyrosine. Creatine is bound at residue S285. ATP-binding positions include R292, 292–296 (RAGVH), R320, 320–325 (RGTGGV), and D335. At T322 the chain carries Phosphothreonine. Residue K381 forms a Glycyl lysine isopeptide (Lys-Gly) (interchain with G-Cter in ubiquitin) linkage.

The protein belongs to the ATP:guanido phosphotransferase family. As to quaternary structure, dimer of identical or non-identical chains, which can be either B (brain type) or M (muscle type). With MM being the major form in skeletal muscle and myocardium, MB existing in myocardium, and BB existing in many tissues, especially brain. Interacts with SLC12A6 (via C-terminus); the interaction may be required for SLC12A6 potassium-chloride cotransport activity. Ubiquitinated by the ECS(ASB9) complex, leading to its degradation by the proteasome.

Its subcellular location is the cytoplasm. It is found in the cytosol. The protein localises to the mitochondrion. The protein resides in the cell membrane. It catalyses the reaction creatine + ATP = N-phosphocreatine + ADP + H(+). Functionally, reversibly catalyzes the transfer of phosphate between ATP and various phosphogens (e.g. creatine phosphate). Creatine kinase isoenzymes play a central role in energy transduction in tissues with large, fluctuating energy demands, such as skeletal muscle, heart, brain and spermatozoa. Acts as a key regulator of adaptive thermogenesis as part of the futile creatine cycle: localizes to the mitochondria of thermogenic fat cells and acts by mediating phosphorylation of creatine to initiate a futile cycle of creatine phosphorylation and dephosphorylation. During the futile creatine cycle, creatine and N-phosphocreatine are in a futile cycle, which dissipates the high energy charge of N-phosphocreatine as heat without performing any mechanical or chemical work. This Sus scrofa (Pig) protein is Creatine kinase B-type (CKB).